The sequence spans 125 residues: Phosphoribosyl-AMP cyclohydrolase (125 aa).

A Mg(2+)-binding site is contributed by Asp74. Cys75 is a Zn(2+) binding site. Mg(2+) is bound by residues Asp76 and Asp78. Zn(2+)-binding residues include Cys92 and Cys99.

It belongs to the PRA-CH family. As to quaternary structure, homodimer. Mg(2+) is required as a cofactor. It depends on Zn(2+) as a cofactor.

The protein resides in the cytoplasm. The catalysed reaction is 1-(5-phospho-beta-D-ribosyl)-5'-AMP + H2O = 1-(5-phospho-beta-D-ribosyl)-5-[(5-phospho-beta-D-ribosylamino)methylideneamino]imidazole-4-carboxamide. Its pathway is amino-acid biosynthesis; L-histidine biosynthesis; L-histidine from 5-phospho-alpha-D-ribose 1-diphosphate: step 3/9. Its function is as follows. Catalyzes the hydrolysis of the adenine ring of phosphoribosyl-AMP. This chain is Phosphoribosyl-AMP cyclohydrolase, found in Pelobacter propionicus (strain DSM 2379 / NBRC 103807 / OttBd1).